The following is an 859-amino-acid chain: Leucine--tRNA ligase (859 aa).

The 'HIGH' region motif lies at 42–52 (PYPSGRLHMGH). Positions 618 to 622 (KMSKS) match the 'KMSKS' region motif. Lysine 621 provides a ligand contact to ATP.

Belongs to the class-I aminoacyl-tRNA synthetase family.

It localises to the cytoplasm. It carries out the reaction tRNA(Leu) + L-leucine + ATP = L-leucyl-tRNA(Leu) + AMP + diphosphate. The protein is Leucine--tRNA ligase of Shewanella sp. (strain ANA-3).